Reading from the N-terminus, the 320-residue chain is Cytochrome f (320 aa).

A signal peptide spans 1–35 (MQTRNAFSCIKEGITRSISISVMIYIIIRAPFSNA). Residues Tyr-36, Cys-56, Cys-59, and His-60 each coordinate heme. Residues 286–306 (VQGLLFFLASIILAQIFLVLK) form a helical membrane-spanning segment.

This sequence belongs to the cytochrome f family. The 4 large subunits of the cytochrome b6-f complex are cytochrome b6, subunit IV (17 kDa polypeptide, petD), cytochrome f and the Rieske protein, while the 4 small subunits are PetG, PetL, PetM and PetN. The complex functions as a dimer. Heme is required as a cofactor.

The protein localises to the plastid. It localises to the chloroplast thylakoid membrane. Its function is as follows. Component of the cytochrome b6-f complex, which mediates electron transfer between photosystem II (PSII) and photosystem I (PSI), cyclic electron flow around PSI, and state transitions. The polypeptide is Cytochrome f (Phaseolus vulgaris (Kidney bean)).